The chain runs to 290 residues: 4-hydroxybenzoate octaprenyltransferase (290 aa).

6 consecutive transmembrane segments (helical) span residues 38–58, 99–119, 141–161, 213–233, 238–258, and 268–288; these read LAGM…GVFF, LFGA…SMTI, LPQL…FTAV, LIIG…GWQL, IYYL…KLIV, and AFLN…LSLL.

This sequence belongs to the UbiA prenyltransferase family. Mg(2+) serves as cofactor.

The protein localises to the cell inner membrane. The enzyme catalyses all-trans-octaprenyl diphosphate + 4-hydroxybenzoate = 4-hydroxy-3-(all-trans-octaprenyl)benzoate + diphosphate. The protein operates within cofactor biosynthesis; ubiquinone biosynthesis. Catalyzes the prenylation of para-hydroxybenzoate (PHB) with an all-trans polyprenyl group. Mediates the second step in the final reaction sequence of ubiquinone-8 (UQ-8) biosynthesis, which is the condensation of the polyisoprenoid side chain with PHB, generating the first membrane-bound Q intermediate 3-octaprenyl-4-hydroxybenzoate. This is 4-hydroxybenzoate octaprenyltransferase from Sodalis glossinidius (strain morsitans).